The chain runs to 424 residues: Dihydroorotase (424 aa).

Residues His61 and His63 each coordinate Zn(2+). Substrate is bound by residues 63–65 (HLR) and Asn95. 3 residues coordinate Zn(2+): Asp153, His180, and His233. Asn279 serves as a coordination point for substrate. Asp306 serves as a coordination point for Zn(2+). Asp306 is a catalytic residue. Position 310 (His310) interacts with substrate.

The protein belongs to the metallo-dependent hydrolases superfamily. DHOase family. Class I DHOase subfamily. It depends on Zn(2+) as a cofactor.

The enzyme catalyses (S)-dihydroorotate + H2O = N-carbamoyl-L-aspartate + H(+). Its pathway is pyrimidine metabolism; UMP biosynthesis via de novo pathway; (S)-dihydroorotate from bicarbonate: step 3/3. Functionally, catalyzes the reversible cyclization of carbamoyl aspartate to dihydroorotate. The protein is Dihydroorotase of Geobacter metallireducens (strain ATCC 53774 / DSM 7210 / GS-15).